A 216-amino-acid polypeptide reads, in one-letter code: Outer-membrane lipoprotein LolB (216 aa).

An N-terminal signal peptide occupies residues 1 to 24; sequence MNNLNYFTKISASCAALALMTLAG. Cysteine 25 is lipidated: N-palmitoyl cysteine. Cysteine 25 is lipidated: S-diacylglycerol cysteine.

It belongs to the LolB family. As to quaternary structure, monomer.

It localises to the cell outer membrane. Functionally, plays a critical role in the incorporation of lipoproteins in the outer membrane after they are released by the LolA protein. The protein is Outer-membrane lipoprotein LolB of Shewanella loihica (strain ATCC BAA-1088 / PV-4).